We begin with the raw amino-acid sequence, 30 residues long: Cytochrome b6/f complex 12.6 kDa peptide (30 aa).

Residues 1–30 are disordered; the sequence is SGSGVRSAKKGGKAQGGQAGVGYKGSTEPG. Positions 13-23 are enriched in gly residues; sequence KAQGGQAGVGY.

The protein localises to the plastid. The protein resides in the chloroplast. Its function is as follows. May be a component of the cytochrome b6/f complex which is part of the photosynthetic respiratory chain. This is Cytochrome b6/f complex 12.6 kDa peptide from Euglena gracilis.